The chain runs to 320 residues: MNQTLNSSGTAELALNHSRGSVVHAACLVLSSLAMFTCLCGMAGNSMVIWLLGFRMRRTPFSIYILNLAAADLLFVFCMAAMLSLETQPLVSTTDKVHELMKRLKYFAYTVGLSLLTAISTQRCLSVLFPIWFKCHRPRHLSAWVCALLWMLCLLTNGLTSCFCSKFLKFNKDQCFRVDMVQAALIMGVLTPVMTLSSLTLFVRVRRSSQQWRRQPTRLFVVVLASVLVFLICSLPLGFYWFVLYWLNLPPDTKVLYFNLSRLSSSMSSSANPLIYFLVGSRRSRRLQGSLGTVLQRALREEPELEGGETPTTGTNEMGA.

Residues 1-33 are Extracellular-facing; sequence MNQTLNSSGTAELALNHSRGSVVHAACLVLSSL. N-linked (GlcNAc...) asparagine glycosylation is found at N2, N6, and N16. The chain crosses the membrane as a helical span at residues 34 to 54; sequence AMFTCLCGMAGNSMVIWLLGF. Topologically, residues 55–62 are cytoplasmic; the sequence is RMRRTPFS. Residues 63 to 83 traverse the membrane as a helical segment; sequence IYILNLAAADLLFVFCMAAML. At 84-112 the chain is on the extracellular side; it reads SLETQPLVSTTDKVHELMKRLKYFAYTVG. Residues 113-133 traverse the membrane as a helical segment; that stretch reads LSLLTAISTQRCLSVLFPIWF. Residues 134 to 142 are Cytoplasmic-facing; that stretch reads KCHRPRHLS. A helical transmembrane segment spans residues 143-163; sequence AWVCALLWMLCLLTNGLTSCF. Residues 164 to 182 lie on the Extracellular side of the membrane; it reads CSKFLKFNKDQCFRVDMVQ. Residues 183–203 form a helical membrane-spanning segment; that stretch reads AALIMGVLTPVMTLSSLTLFV. The Cytoplasmic segment spans residues 204–218; sequence RVRRSSQQWRRQPTR. A helical transmembrane segment spans residues 219–239; the sequence is LFVVVLASVLVFLICSLPLGF. Over 240–257 the chain is Extracellular; the sequence is YWFVLYWLNLPPDTKVLY. A helical membrane pass occupies residues 258-280; sequence FNLSRLSSSMSSSANPLIYFLVG. Residues 281–320 lie on the Cytoplasmic side of the membrane; sequence SRRSRRLQGSLGTVLQRALREEPELEGGETPTTGTNEMGA. A disordered region spans residues 301 to 320; the sequence is EEPELEGGETPTTGTNEMGA. Residues 308–320 are compositionally biased toward low complexity; sequence GETPTTGTNEMGA.

Belongs to the G-protein coupled receptor 1 family. Mas subfamily. As to expression, co-expressed in the small diameter neurons with P2X3 and VR1 in dorsal root ganglia.

It is found in the cell membrane. May regulate nociceptor function and/or development, including the sensation or modulation of pain. Functions as a specific membrane receptor for beta-alanine. The receptor couples with G-protein G(q) and G(i). In Macaca fascicularis (Crab-eating macaque), this protein is Mas-related G-protein coupled receptor member D (MRGPRD).